A 407-amino-acid chain; its full sequence is Chorismate synthase (407 aa).

NADP(+) is bound by residues arginine 40 and arginine 46. FMN-binding positions include 135 to 137 (RAS), 256 to 257 (QA), glycine 300, 315 to 319 (KPIST), and arginine 341.

It belongs to the chorismate synthase family. As to quaternary structure, homotetramer. It depends on FMNH2 as a cofactor.

It catalyses the reaction 5-O-(1-carboxyvinyl)-3-phosphoshikimate = chorismate + phosphate. Its pathway is metabolic intermediate biosynthesis; chorismate biosynthesis; chorismate from D-erythrose 4-phosphate and phosphoenolpyruvate: step 7/7. Catalyzes the anti-1,4-elimination of the C-3 phosphate and the C-6 proR hydrogen from 5-enolpyruvylshikimate-3-phosphate (EPSP) to yield chorismate, which is the branch point compound that serves as the starting substrate for the three terminal pathways of aromatic amino acid biosynthesis. This reaction introduces a second double bond into the aromatic ring system. This chain is Chorismate synthase, found in Mycobacterium leprae (strain Br4923).